We begin with the raw amino-acid sequence, 218 residues long: Probable transaldolase (218 aa).

The active-site Schiff-base intermediate with substrate is the lysine 83.

The protein belongs to the transaldolase family. Type 3B subfamily.

The protein localises to the cytoplasm. The enzyme catalyses D-sedoheptulose 7-phosphate + D-glyceraldehyde 3-phosphate = D-erythrose 4-phosphate + beta-D-fructose 6-phosphate. The protein operates within carbohydrate degradation; pentose phosphate pathway; D-glyceraldehyde 3-phosphate and beta-D-fructose 6-phosphate from D-ribose 5-phosphate and D-xylulose 5-phosphate (non-oxidative stage): step 2/3. Functionally, transaldolase is important for the balance of metabolites in the pentose-phosphate pathway. The chain is Probable transaldolase from Thermotoga sp. (strain RQ2).